A 125-amino-acid chain; its full sequence is Large ribosomal subunit protein uL24 (125 aa).

The protein belongs to the universal ribosomal protein uL24 family. As to quaternary structure, part of the 50S ribosomal subunit.

Its function is as follows. One of two assembly initiator proteins, it binds directly to the 5'-end of the 23S rRNA, where it nucleates assembly of the 50S subunit. One of the proteins that surrounds the polypeptide exit tunnel on the outside of the subunit. In Mycoplasma mobile (strain ATCC 43663 / 163K / NCTC 11711) (Mesomycoplasma mobile), this protein is Large ribosomal subunit protein uL24.